The chain runs to 369 residues: MKKEKKDYYEILGVPRDATQEEIKRAYKRLVKEWHPDRHPENRKEAEQRFKEIQEAYEVLSDPQKRAMYDRFGYVGEQPTYQETESGGFFDDIFRDFENIFNRDIFDVFFGERPHQEERREYARRGEDIRYEIEVTLSDLINGAEIPVEYERYETCPRCGGTGVEPNAGYMDCPSCGGTGRIREERRSFFGYFVSERTCERCGGTGKIPREYCHECGGSGRVLRKVRRTVKIPPNVEDGTHLRITGGGNAGYYGGPYGDLIIIVRVKPDPRFKKSGSDLVYDVTIDYLQAILGTTVEVPLPEGGTTMLKIPPGTQPETVFRLKGKGLPNRYGRRGDLIVNVHVEIPKSLSREERKVLEELAKKRGVTIG.

The J domain occupies 7-73; it reads DYYEILGVPR…QKRAMYDRFG (67 aa). The segment at 143 to 225 adopts a CR-type zinc-finger fold; that stretch reads GAEIPVEYER…CGGSGRVLRK (83 aa). Zn(2+) is bound by residues Cys156, Cys159, Cys173, Cys176, Cys199, Cys202, Cys213, and Cys216. 4 CXXCXGXG motif repeats span residues 156 to 163, 173 to 180, 199 to 206, and 213 to 220; these read CPRCGGTG, CPSCGGTG, CERCGGTG, and CHECGGSG.

Belongs to the DnaJ family. Homodimer. Zn(2+) serves as cofactor.

The protein resides in the cytoplasm. Functionally, participates actively in the response to hyperosmotic and heat shock by preventing the aggregation of stress-denatured proteins and by disaggregating proteins, also in an autonomous, DnaK-independent fashion. Unfolded proteins bind initially to DnaJ; upon interaction with the DnaJ-bound protein, DnaK hydrolyzes its bound ATP, resulting in the formation of a stable complex. GrpE releases ADP from DnaK; ATP binding to DnaK triggers the release of the substrate protein, thus completing the reaction cycle. Several rounds of ATP-dependent interactions between DnaJ, DnaK and GrpE are required for fully efficient folding. Also involved, together with DnaK and GrpE, in the DNA replication of plasmids through activation of initiation proteins. In Thermotoga maritima (strain ATCC 43589 / DSM 3109 / JCM 10099 / NBRC 100826 / MSB8), this protein is Chaperone protein DnaJ.